We begin with the raw amino-acid sequence, 99 residues long: Beta-defensin 127 (99 aa).

An N-terminal signal peptide occupies residues 1–20; sequence MGLFMIIAILLFQKPTVTEQ. 3 disulfide bridges follow: cysteine 24–cysteine 53, cysteine 33–cysteine 47, and cysteine 37–cysteine 54. The propeptide occupies 66–99; the sequence is ITKPSHPKPATLALTLQDYVTIIENFPSLKTQST.

The protein belongs to the beta-defensin family.

Its subcellular location is the secreted. Functionally, has antibacterial activity. The polypeptide is Beta-defensin 127 (DEFB127) (Pan troglodytes (Chimpanzee)).